A 279-amino-acid polypeptide reads, in one-letter code: Ribosomal RNA small subunit methyltransferase A (279 aa).

5 residues coordinate S-adenosyl-L-methionine: Leu-42, Gly-67, Glu-88, Asp-113, and Asn-129.

The protein belongs to the class I-like SAM-binding methyltransferase superfamily. rRNA adenine N(6)-methyltransferase family. RsmA subfamily.

It is found in the cytoplasm. It catalyses the reaction adenosine(1518)/adenosine(1519) in 16S rRNA + 4 S-adenosyl-L-methionine = N(6)-dimethyladenosine(1518)/N(6)-dimethyladenosine(1519) in 16S rRNA + 4 S-adenosyl-L-homocysteine + 4 H(+). Functionally, specifically dimethylates two adjacent adenosines (A1518 and A1519) in the loop of a conserved hairpin near the 3'-end of 16S rRNA in the 30S particle. May play a critical role in biogenesis of 30S subunits. The protein is Ribosomal RNA small subunit methyltransferase A of Thermotoga maritima (strain ATCC 43589 / DSM 3109 / JCM 10099 / NBRC 100826 / MSB8).